Here is a 292-residue protein sequence, read N- to C-terminus: SSLEERRAARAARRRKQDENEGGEEQEETTSRRSRRRQQEDEEDSYSAPAEPAYDAEAENRRRQQQEEEEAAARAAEEEYNRQQEELRRQRQEEERQRREEEQRRQQEEEERLRLEREEQEREEEARRMAEEQKKKKKKGLGGLSPEKKKMLKKLIMQKAAEDLANEAKAKAEAKEKYINDLVPKFSTDGKDVAALQALCKDFHKRLASLEEDVYDWEAKIRKQDFEINELTLKVNDTKGKFVKPVLRKVNKTESKLDKIQRKEAKKSDFRDNLKSSREHEADKEGGEGENE.

At serine 1 the chain carries N-acetylserine. A disordered region spans residues serine 1–lysine 149. Positions tyrosine 46–aspartate 55 are enriched in low complexity. Residues alanine 58–lysine 134 show a composition bias toward basic and acidic residues. The segment at aspartate 237 to valine 250 is actin-binding. Positions serine 255 to glutamate 292 are disordered.

The protein belongs to the troponin I family.

In terms of biological role, troponin I is the inhibitory subunit of troponin, the thin filament regulatory complex which confers calcium-sensitivity to striated muscle actomyosin ATPase activity. This Chlamys nipponensis akazara (Akazara scallop) protein is Troponin I.